The sequence spans 1186 residues: MYND-type zinc finger-containing chromatin reader ZMYND8 (1186 aa).

Basic and acidic residues predominate over residues 1–12; that stretch reads MDISTRSKDPGS. Residues 1 to 57 are disordered; it reads MDISTRSKDPGSAERTAQKRKFPSPPHSSNGHSPQDTSTSPIKKKKKPGLLNSNNKE. Residues 1–850 form a required for interaction with CCNT1 region; that stretch reads MDISTRSKDP…QQQQQQQNQQ (850 aa). S12 participates in a covalent cross-link: Glycyl lysine isopeptide (Lys-Gly) (interchain with G-Cter in SUMO2). Residue S24 is modified to Phosphoserine. Glycyl lysine isopeptide (Lys-Gly) (interchain with G-Cter in SUMO2) cross-links involve residues K56 and K70. Residues 75-268 are interaction with histone H3K4me0; that stretch reads TDPVDVVPQD…YLAACQKRDN (194 aa). An interaction with histone H3K14ac region spans residues 75-406; the sequence is TDPVDVVPQD…VKLNFDMTAS (332 aa). The PHD-type zinc-finger motif lies at 88–133; that stretch reads DFYCWVCHREGQVLCCELCPRVYHAKCLRLTSEPEGDWFCPECEKI. The segment at 88 to 327 is required for interaction with histone H3 and histone H4; sequence DFYCWVCHRE…INNCYLMSKE (240 aa). The Zn(2+) site is built by C91, C94, C103, C106, H111, C114, C127, and C130. The Bromo domain occupies 145–252; the sequence is AMTMLTIEQL…KICEHEMNEI (108 aa). The Zn(2+) site is built by C255, C258, and C274. One can recognise a PWWP domain in the interval 277–327; that stretch reads PHPLVWAKLKGFPFWPAKALRDKDGQVDARFFGQHDRAWVPINNCYLMSKE. K390 participates in a covalent cross-link: Glycyl lysine isopeptide (Lys-Gly) (interchain with G-Cter in SUMO2). Position 404 is a phosphothreonine (T404). At S406 the chain carries Phosphoserine. Residues 412–512 form a disordered region; it reads SKPVLSGGTG…TTKTDKTSTT (101 aa). Residue K413 is modified to N6-acetyllysine; alternate. K413 participates in a covalent cross-link: Glycyl lysine isopeptide (Lys-Gly) (interchain with G-Cter in SUMO2); alternate. Phosphoserine is present on residues S417, S425, and S432. A compositionally biased stretch (polar residues) spans 433–442; sequence PMSTNSSVHT. S444 is subject to Phosphoserine. A Glycyl lysine isopeptide (Lys-Gly) (interchain with G-Cter in SUMO2) cross-link involves residue K453. A phosphoserine mark is found at S460, S462, S465, S486, S490, and S495. Positions 472–489 are enriched in polar residues; the sequence is STASPASTKTGQAGSLSG. K505 is covalently cross-linked (Glycyl lysine isopeptide (Lys-Gly) (interchain with G-Cter in SUMO2)). 2 positions are modified to phosphoserine: S514 and S523. A Glycyl lysine isopeptide (Lys-Gly) (interchain with G-Cter in SUMO2) cross-link involves residue K530. At T541 the chain carries Phosphothreonine. Position 547 is a phosphoserine (S547). A Glycyl lysine isopeptide (Lys-Gly) (interchain with G-Cter in SUMO2) cross-link involves residue K549. T563 carries the post-translational modification Phosphothreonine. Residues 582–884 are disordered; that stretch reads TAVEHSDSED…ITQSPSTSTI (303 aa). 2 stretches are compositionally biased toward basic and acidic residues: residues 585 to 597 and 606 to 631; these read EHSD…KSDS and DEQK…EPSA. Residues K611 and K645 each participate in a glycyl lysine isopeptide (Lys-Gly) (interchain with G-Cter in SUMO2) cross-link. A phosphoserine mark is found at S652 and S655. Residues 656 to 696 are compositionally biased toward basic and acidic residues; sequence EKADPGAVKDKASPEPEKDFSEKAKPSPHPIKDKLKGKDET. A Glycyl lysine isopeptide (Lys-Gly) (interchain with G-Cter in SUMO2) cross-link involves residue K657. 5 positions are modified to phosphoserine: S668, S682, S707, S709, and S737. Residues 718-738 are compositionally biased toward basic and acidic residues; the sequence is GEDHSGREGRKNKKEPKEPSP. At T746 the chain carries Phosphothreonine. 2 positions are modified to phosphoserine: S754 and S756. Low complexity predominate over residues 766–799; that stretch reads SSAQTSAAGATATTSTSSTVTVTAPAPAATGSPV. Over residues 818 to 832 the composition is skewed to polar residues; sequence VWNSSSKFQTSSQKW. Residues 835–857 show a composition bias toward low complexity; that stretch reads QKMQRQQQQQQQQNQQQQPQSSQ. Residues 873–884 are compositionally biased toward polar residues; that stretch reads KEITQSPSTSTI. The interval 875-1047 is required for homodimerization; it reads ITQSPSTSTI…YCCWNTSYCD (173 aa). Zn(2+)-binding residues include C1028, C1031, C1039, C1040, C1046, C1050, H1058, and C1062. The MYND-type zinc finger occupies 1028–1062; it reads CANCKKEAIFYCCWNTSYCDYPCQQAHWPEHMKSC. The tract at residues 1028–1062 is required for recruitment to DNA damage sites and for interaction with the NuRD complex, CHD4, HDAC1, HDAC2 and KDM1A; the sequence is CANCKKEAIFYCCWNTSYCDYPCQQAHWPEHMKSC. The segment at 1071–1186 is disordered; sequence QEADAEVNTE…KESRLDTFWD (116 aa). A compositionally biased stretch (low complexity) spans 1085–1103; that stretch reads SSQGSSSSTQSAPSETASA. Over residues 1104 to 1116 the composition is skewed to basic and acidic residues; sequence SKEKETSAEKSKE. A Glycyl lysine isopeptide (Lys-Gly) (interchain with G-Cter in SUMO2) cross-link involves residue K1115. At S1119 the chain carries Phosphoserine. Over residues 1121–1140 the composition is skewed to polar residues; that stretch reads LDLSGSRETPSSILLGSNQG. A Phosphoserine modification is found at S1141. Positions 1147–1186 are interaction with PRKCB1; sequence NKSSWSSSDEKRGSTRSDHNTSTSTKSLLPKESRLDTFWD. Composition is skewed to basic and acidic residues over residues 1154–1165 and 1175–1186; these read SDEKRGSTRSDH and LPKESRLDTFWD.

As to quaternary structure, monomer and homodimer. Interacts with NuRD subcomplexes containing GATAD2A. Interacts with the histone deacetylase NuRD complex subunit CHD4; the interaction is direct, appears to occur with monomeric ZMYND8, and is increased following DNA damage. Interacts (via N-terminus) with the P-TEFb complex subunit CCNT1 (via central region); the interaction is direct and the association appears to occur between homodimeric ZMYND8 and the activated form of the P-TEFb complex. Interacts (via N-terminus) with DBN1 (via ADF-H domain); the interaction leads to sequestering of ZMYND8 in the cytoplasm. Interacts with the P-TEFb complex subunit CDK9; the association appears to occur between homodimeric ZMYND8 and the activated form of the P-TEFb complex. Interacts with EZH2; the interaction is dependent on the presence of chromatin. Interacts (via MYND domain) with the NuRD complex subunit GATAD2A. Interacts with histone H3 (via N-terminus) that is both methylated at 'Lys-4' (H3K4me1) and acetylated at 'Lys-14' (H3K14ac), with histone H3 (via N-terminus) unmodified at 'Lys-4' (H3K4me0) and acetylated at 'Lys-14' (H3K14ac), and with histone H3 (via N-terminus) di-methylated at 'Lys-36' (H3K36me2). Interacts (via Bromo domain) with histone H4 acetylated at 'Lys-16' (H4K16ac). Interacts with HDAC1. Interacts with HDAC2. Interacts with KDM1A. Interacts with KDM5C. Interacts with KDM5D. Interacts in vitro with PRKCB. Interacts with RNA polymerase II subunit POLR2A phosphorylated at 'Ser-5'. Interacts with ZNF592. Interacts with ZNF687. Does not interact with GATAD2B. As to expression, expressed in neurons (at protein level). Absent in astrocytes (at protein level). Expressed in all tissues examined with highest expression in brain, lung, pancreas, and placenta. Expressed in cutaneous T-cell lymphomas (CTCL).

It localises to the nucleus. The protein resides in the chromosome. Its subcellular location is the cytoplasm. In terms of biological role, chromatin reader that recognizes dual histone modifications such as histone H3.1 dimethylated at 'Lys-36' and histone H4 acetylated at 'Lys-16' (H3.1K36me2-H4K16ac) and histone H3 methylated at 'Lys-4' and histone H4 acetylated at 'Lys-14' (H3K4me1-H3K14ac). May act as a transcriptional corepressor for KDM5D by recognizing the dual histone signature H3K4me1-H3K14ac. May also act as a transcriptional corepressor for KDM5C and EZH2. Recognizes acetylated histone H4 and recruits the NuRD chromatin remodeling complex to damaged chromatin for transcriptional repression and double-strand break repair by homologous recombination. Also activates transcription elongation by RNA polymerase II through recruiting the P-TEFb complex to target promoters. Localizes to H3.1K36me2-H4K16ac marks at all-trans-retinoic acid (ATRA)-responsive genes and positively regulates their expression. Promotes neuronal differentiation by associating with regulatory regions within the MAPT gene, to enhance transcription of a protein-coding MAPT isoform and suppress the non-coding MAPT213 isoform. Suppresses breast cancer, and prostate cancer cell invasion and metastasis. The chain is MYND-type zinc finger-containing chromatin reader ZMYND8 (ZMYND8) from Homo sapiens (Human).